We begin with the raw amino-acid sequence, 201 residues long: UPF0637 protein LCA_0842 (201 aa).

This sequence belongs to the UPF0637 family.

This chain is UPF0637 protein LCA_0842, found in Latilactobacillus sakei subsp. sakei (strain 23K) (Lactobacillus sakei subsp. sakei).